A 315-amino-acid chain; its full sequence is Protein-methionine-sulfoxide reductase catalytic subunit MsrP (315 aa).

Residues 1–45 (MPSYRPPKIASSEITPRQVYLRRREFLGAATLGAMALYGAGKASA) constitute a signal peptide (tat-type signal). Mo-molybdopterin contacts are provided by residues N71, 74-75 (YE), C129, T164, N214, R219, and 230-232 (GIK).

This sequence belongs to the MsrP family. In terms of assembly, heterodimer of a catalytic subunit (MsrP) and a heme-binding subunit (MsrQ). It depends on Mo-molybdopterin as a cofactor. Predicted to be exported by the Tat system. The position of the signal peptide cleavage has not been experimentally proven.

It is found in the periplasm. The catalysed reaction is L-methionyl-[protein] + a quinone + H2O = L-methionyl-(S)-S-oxide-[protein] + a quinol. The enzyme catalyses L-methionyl-[protein] + a quinone + H2O = L-methionyl-(R)-S-oxide-[protein] + a quinol. In terms of biological role, part of the MsrPQ system that repairs oxidized periplasmic proteins containing methionine sulfoxide residues (Met-O), using respiratory chain electrons. Thus protects these proteins from oxidative-stress damage caused by reactive species of oxygen and chlorine generated by the host defense mechanisms. MsrPQ is essential for the maintenance of envelope integrity under bleach stress, rescuing a wide series of structurally unrelated periplasmic proteins from methionine oxidation. The catalytic subunit MsrP is non-stereospecific, being able to reduce both (R-) and (S-) diastereoisomers of methionine sulfoxide. The protein is Protein-methionine-sulfoxide reductase catalytic subunit MsrP of Rhizobium etli (strain ATCC 51251 / DSM 11541 / JCM 21823 / NBRC 15573 / CFN 42).